Consider the following 211-residue polypeptide: Histidine biosynthesis bifunctional protein HisIE (211 aa).

Residues M1–K107 are phosphoribosyl-AMP cyclohydrolase. Residues I108–W211 are phosphoribosyl-ATP pyrophosphohydrolase.

It in the N-terminal section; belongs to the PRA-CH family. The protein in the C-terminal section; belongs to the PRA-PH family.

Its subcellular location is the cytoplasm. The catalysed reaction is 1-(5-phospho-beta-D-ribosyl)-ATP + H2O = 1-(5-phospho-beta-D-ribosyl)-5'-AMP + diphosphate + H(+). It carries out the reaction 1-(5-phospho-beta-D-ribosyl)-5'-AMP + H2O = 1-(5-phospho-beta-D-ribosyl)-5-[(5-phospho-beta-D-ribosylamino)methylideneamino]imidazole-4-carboxamide. It functions in the pathway amino-acid biosynthesis; L-histidine biosynthesis; L-histidine from 5-phospho-alpha-D-ribose 1-diphosphate: step 2/9. Its pathway is amino-acid biosynthesis; L-histidine biosynthesis; L-histidine from 5-phospho-alpha-D-ribose 1-diphosphate: step 3/9. The protein is Histidine biosynthesis bifunctional protein HisIE of Staphylococcus epidermidis (strain ATCC 35984 / DSM 28319 / BCRC 17069 / CCUG 31568 / BM 3577 / RP62A).